The primary structure comprises 137 residues: Peptide methionine sulfoxide reductase MsrB (137 aa).

A MsrB domain is found at Ala-7 to Gly-129. Residues Cys-46, Cys-49, Cys-95, and Cys-98 each coordinate Zn(2+). Catalysis depends on Cys-118, which acts as the Nucleophile.

Belongs to the MsrB Met sulfoxide reductase family. The cofactor is Zn(2+).

The catalysed reaction is L-methionyl-[protein] + [thioredoxin]-disulfide + H2O = L-methionyl-(R)-S-oxide-[protein] + [thioredoxin]-dithiol. The sequence is that of Peptide methionine sulfoxide reductase MsrB from Escherichia coli O8 (strain IAI1).